The following is a 609-amino-acid chain: Numb-like protein (609 aa).

Disordered regions lie at residues 1-68 (MSRS…QWQA), 223-283 (GSFR…PVAA), 372-421 (ASAG…EEVS), 434-464 (QQQQQQQQQQQQQAASVAPVPTMPPALQPFP), and 537-609 (AGAF…EIEL). Residues 19–29 (PPAPCGAPGPP) show a composition bias toward pro residues. In terms of domain architecture, PID spans 74-223 (RKGTCSFPVR…ASRTSFAREG (150 aa)). A phosphoserine mark is found at S224 and S228. Residues 233-245 (PAEREAPDKKKAE) show a composition bias toward basic and acidic residues. Positions 246–259 (AAAAPTVAPGPAQP) are enriched in low complexity. At S263 the chain carries Phosphoserine. T279 is subject to Phosphothreonine. Residues 409 to 418 (TPSEAERWLE) are compositionally biased toward basic and acidic residues. S411 is modified (phosphoserine). Positions 434–446 (QQQQQQQQQQQQQ) are enriched in low complexity. Pro residues-rich tracts occupy residues 454 to 464 (PTMPPALQPFP) and 558 to 573 (NGAPWPPEPAPAPAPE).

In terms of assembly, interacts (via PTB domain) with MAP3K7IP2 (via C-terminal). Interacts (via C-terminal) with TRAF6 (via TRAF domains). Associates with EPS15 and NOTCH1.

It localises to the cytoplasm. Functionally, plays a role in the process of neurogenesis. Required throughout embryonic neurogenesis to maintain neural progenitor cells, also called radial glial cells (RGCs), by allowing their daughter cells to choose progenitor over neuronal cell fate. Not required for the proliferation of neural progenitor cells before the onset of embryonic neurogenesis. Also required postnatally in the subventricular zone (SVZ) neurogenesis by regulating SVZ neuroblasts survival and ependymal wall integrity. Negative regulator of NF-kappa-B signaling pathway. The inhibition of NF-kappa-B activation is mediated at least in part, by preventing MAP3K7IP2 to interact with polyubiquitin chains of TRAF6 and RIPK1 and by stimulating the 'Lys-48'-linked polyubiquitination and degradation of TRAF6 in cortical neurons. The protein is Numb-like protein (NUMBL) of Homo sapiens (Human).